We begin with the raw amino-acid sequence, 310 residues long: Haloalkane dehalogenase (310 aa).

The AB hydrolase-1 domain maps to 49–295 (VFLCLHGEPT…DAGHFVQEFG (247 aa)). Asp-124 functions as the Nucleophile in the catalytic mechanism. The chloride site is built by Trp-125 and Trp-175. Asp-260 acts as the Proton donor in catalysis. Catalysis depends on His-289, which acts as the Proton acceptor.

The protein belongs to the haloalkane dehalogenase family. Type 1 subfamily. In terms of assembly, monomer.

The catalysed reaction is 1-haloalkane + H2O = a halide anion + a primary alcohol + H(+). It carries out the reaction 1,2-dichloroethane + H2O = 2-chloroethanol + chloride + H(+). It functions in the pathway xenobiotic degradation; 1,2-dichloroethane degradation; glycolate from 1,2-dichloroethane: step 1/4. Inhibited by thiol reagents such as p-chloromercuribenzoate and iodoacetamide. Functionally, catalyzes hydrolytic cleavage of carbon-halogen bonds in halogenated aliphatic compounds, leading to the formation of the corresponding primary alcohols, halide ions and protons. Has a broad substrate specificity, which includes terminally mono- and di- chlorinated and brominated alkanes (up to C4 only). The highest activity was found with 1,2-dichloroethane, 1,3-dichloropropane, and 1,2-dibromoethane. In Xanthobacter autotrophicus, this protein is Haloalkane dehalogenase (dhlA).